The sequence spans 323 residues: Coiled-coil domain-containing protein 160 (323 aa).

Positions 1 to 81 (MDARRKHWKD…EGEQDSNLRE (81 aa)) are disordered. Residues 48-58 (SNFSVRNTQEG) show a composition bias toward polar residues. Residues 144 to 289 (LRLHLLNEEL…IKNELRVEKT (146 aa)) adopt a coiled-coil conformation.

This sequence belongs to the CCDC160 family.

The polypeptide is Coiled-coil domain-containing protein 160 (Ccdc160) (Mus musculus (Mouse)).